The sequence spans 349 residues: Holliday junction branch migration complex subunit RuvB (349 aa).

The large ATPase domain (RuvB-L) stretch occupies residues 1–185; it reads MSQEKERLIS…FGSIFRLDFY (185 aa). ATP contacts are provided by residues Leu24, Arg25, Gly66, Lys69, Thr70, Thr71, 132 to 134, Arg175, Tyr185, and Arg222; that span reads EDY. Thr70 contacts Mg(2+). The interval 186–256 is small ATPAse domain (RuvB-S); it reads DEEAIHDIVR…IAAESLACLE (71 aa). The segment at 259 to 349 is head domain (RuvB-H); that stretch reads KLGLDEIDHK…QQGLWTENGS (91 aa). DNA is bound by residues Arg314 and Arg319.

The protein belongs to the RuvB family. Homohexamer. Forms an RuvA(8)-RuvB(12)-Holliday junction (HJ) complex. HJ DNA is sandwiched between 2 RuvA tetramers; dsDNA enters through RuvA and exits via RuvB. An RuvB hexamer assembles on each DNA strand where it exits the tetramer. Each RuvB hexamer is contacted by two RuvA subunits (via domain III) on 2 adjacent RuvB subunits; this complex drives branch migration. In the full resolvosome a probable DNA-RuvA(4)-RuvB(12)-RuvC(2) complex forms which resolves the HJ.

The protein localises to the cytoplasm. The catalysed reaction is ATP + H2O = ADP + phosphate + H(+). In terms of biological role, the RuvA-RuvB-RuvC complex processes Holliday junction (HJ) DNA during genetic recombination and DNA repair, while the RuvA-RuvB complex plays an important role in the rescue of blocked DNA replication forks via replication fork reversal (RFR). RuvA specifically binds to HJ cruciform DNA, conferring on it an open structure. The RuvB hexamer acts as an ATP-dependent pump, pulling dsDNA into and through the RuvAB complex. RuvB forms 2 homohexamers on either side of HJ DNA bound by 1 or 2 RuvA tetramers; 4 subunits per hexamer contact DNA at a time. Coordinated motions by a converter formed by DNA-disengaged RuvB subunits stimulates ATP hydrolysis and nucleotide exchange. Immobilization of the converter enables RuvB to convert the ATP-contained energy into a lever motion, pulling 2 nucleotides of DNA out of the RuvA tetramer per ATP hydrolyzed, thus driving DNA branch migration. The RuvB motors rotate together with the DNA substrate, which together with the progressing nucleotide cycle form the mechanistic basis for DNA recombination by continuous HJ branch migration. Branch migration allows RuvC to scan DNA until it finds its consensus sequence, where it cleaves and resolves cruciform DNA. The sequence is that of Holliday junction branch migration complex subunit RuvB from Dehalococcoides mccartyi (strain CBDB1).